We begin with the raw amino-acid sequence, 242 residues long: Ribosomal RNA small subunit methyltransferase G (242 aa).

Residues Gly79, Phe84, Ala130–Glu131, and Arg150 each bind S-adenosyl-L-methionine.

Belongs to the methyltransferase superfamily. RNA methyltransferase RsmG family.

It is found in the cytoplasm. Specifically methylates the N7 position of a guanine in 16S rRNA. The protein is Ribosomal RNA small subunit methyltransferase G of Levilactobacillus brevis (strain ATCC 367 / BCRC 12310 / CIP 105137 / JCM 1170 / LMG 11437 / NCIMB 947 / NCTC 947) (Lactobacillus brevis).